A 216-amino-acid chain; its full sequence is Nucleoside triphosphate pyrophosphatase (216 aa).

Asp82 functions as the Proton acceptor in the catalytic mechanism.

The protein belongs to the Maf family. Requires a divalent metal cation as cofactor.

The protein resides in the cytoplasm. It carries out the reaction a ribonucleoside 5'-triphosphate + H2O = a ribonucleoside 5'-phosphate + diphosphate + H(+). The enzyme catalyses a 2'-deoxyribonucleoside 5'-triphosphate + H2O = a 2'-deoxyribonucleoside 5'-phosphate + diphosphate + H(+). Its function is as follows. Nucleoside triphosphate pyrophosphatase. May have a dual role in cell division arrest and in preventing the incorporation of modified nucleotides into cellular nucleic acids. This Mycobacterium ulcerans (strain Agy99) protein is Nucleoside triphosphate pyrophosphatase.